We begin with the raw amino-acid sequence, 395 residues long: Subtilisin-like protease 5 (395 aa).

The N-terminal stretch at 1-19 (MGFLTVLYLSLAALSVTNA) is a signal peptide. The propeptide occupies 20–115 (AQIMSAPNGA…VEPDAIISQH (96 aa)). The region spanning 36–112 (YIVVMKDDTS…VAFVEPDAII (77 aa)) is the Inhibitor I9 domain. The 272-residue stretch at 124–395 (PWGLSRLSNR…RRLLYNGSGR (272 aa)) folds into the Peptidase S8 domain. Active-site charge relay system residues include Asp155 and His186. N-linked (GlcNAc...) asparagine glycans are attached at residues Asn229 and Asn247. The active-site Charge relay system is the Ser341. A disordered region spans residues 374–395 (QPTIHNPGPDTTRRLLYNGSGR). A glycan (N-linked (GlcNAc...) asparagine) is linked at Asn391.

It belongs to the peptidase S8 family.

The protein localises to the secreted. Its function is as follows. Secreted subtilisin-like serine protease with keratinolytic activity that contributes to pathogenicity. The protein is Subtilisin-like protease 5 (SUB5) of Arthroderma otae (strain ATCC MYA-4605 / CBS 113480) (Microsporum canis).